Consider the following 117-residue polypeptide: MEFGLSWVFLVAILKGVQCEVQLVESGGGLVQPGGSLRLSCAASGFTFSSYWMHWVRQAPGKGLVWVSRINSDGSSTSYADSVKGRFTISRDNAKNTLYLQMNSLRAEDTAVYYCAR.

Residues 1 to 19 form the signal peptide; the sequence is MEFGLSWVFLVAILKGVQC. Positions 20-44 are framework-1; the sequence is EVQLVESGGGLVQPGGSLRLSCAAS. The region spanning 20 to 117 is the Ig-like domain; it reads EVQLVESGGG…EDTAVYYCAR (98 aa). Cysteine 41 and cysteine 115 are disulfide-bonded. Residues 45-52 are complementarity-determining-1; it reads GFTFSSYW. A framework-2 region spans residues 53–69; that stretch reads MHWVRQAPGKGLVWVSR. Positions 70–77 are complementarity-determining-2; it reads INSDGSST. Positions 78 to 115 are framework-3; the sequence is SYADSVKGRFTISRDNAKNTLYLQMNSLRAEDTAVYYC. The tract at residues 116–117 is complementarity-determining-3; the sequence is AR.

In terms of assembly, immunoglobulins are composed of two identical heavy chains and two identical light chains; disulfide-linked.

Its subcellular location is the secreted. The protein localises to the cell membrane. In terms of biological role, v region of the variable domain of immunoglobulin heavy chains that participates in the antigen recognition. Immunoglobulins, also known as antibodies, are membrane-bound or secreted glycoproteins produced by B lymphocytes. In the recognition phase of humoral immunity, the membrane-bound immunoglobulins serve as receptors which, upon binding of a specific antigen, trigger the clonal expansion and differentiation of B lymphocytes into immunoglobulins-secreting plasma cells. Secreted immunoglobulins mediate the effector phase of humoral immunity, which results in the elimination of bound antigens. The antigen binding site is formed by the variable domain of one heavy chain, together with that of its associated light chain. Thus, each immunoglobulin has two antigen binding sites with remarkable affinity for a particular antigen. The variable domains are assembled by a process called V-(D)-J rearrangement and can then be subjected to somatic hypermutations which, after exposure to antigen and selection, allow affinity maturation for a particular antigen. This is Immunoglobulin heavy variable 3-74 from Homo sapiens (Human).